The chain runs to 276 residues: Undecaprenyl-diphosphatase (276 aa).

6 helical membrane passes run 43 to 63 (RAMA…VWEF), 85 to 105 (GNLL…ADLI), 109 to 129 (LFNP…MLWA), 183 to 203 (AATE…AVYS), 214 to 234 (ADLP…MIAV), and 249 to 269 (FAWY…FGWV).

It belongs to the UppP family.

It localises to the cell inner membrane. The catalysed reaction is di-trans,octa-cis-undecaprenyl diphosphate + H2O = di-trans,octa-cis-undecaprenyl phosphate + phosphate + H(+). In terms of biological role, catalyzes the dephosphorylation of undecaprenyl diphosphate (UPP). Confers resistance to bacitracin. The protein is Undecaprenyl-diphosphatase of Pseudomonas putida (strain GB-1).